We begin with the raw amino-acid sequence, 328 residues long: Leucine carboxyl methyltransferase 1 (328 aa).

S-adenosyl-L-methionine contacts are provided by residues arginine 81, glycine 105, aspartate 128, aspartate 175 to asparagine 177, and glutamate 201.

The protein belongs to the methyltransferase superfamily. LCMT family.

It carries out the reaction [phosphatase 2A protein]-C-terminal L-leucine + S-adenosyl-L-methionine = [phosphatase 2A protein]-C-terminal L-leucine methyl ester + S-adenosyl-L-homocysteine. Its activity is regulated as follows. Inhibited by S-adenosyl-L-homocysteine. Functionally, methylates the carboxyl group of the C-terminal leucine residue of protein phosphatase 2A catalytic subunits to form alpha-leucine ester residues. Acts on the two major protein phosphatase 2A catalytic subunits, PPH21 and PPH22. This chain is Leucine carboxyl methyltransferase 1 (PPM1), found in Saccharomyces cerevisiae (strain ATCC 204508 / S288c) (Baker's yeast).